Here is a 764-residue protein sequence, read N- to C-terminus: 5-methyltetrahydropteroyltriglutamate--homocysteine methyltransferase (764 aa).

Residues 16–19 (RELK) and K115 contribute to the 5-methyltetrahydropteroyltri-L-glutamate site. L-homocysteine is bound by residues 435 to 437 (IGS) and E488. L-methionine-binding positions include 435–437 (IGS) and E488. Residues 519 to 520 (RC) and W565 each bind 5-methyltetrahydropteroyltri-L-glutamate. Position 603 (D603) interacts with L-homocysteine. D603 contributes to the L-methionine binding site. A 5-methyltetrahydropteroyltri-L-glutamate-binding site is contributed by E609. Zn(2+) is bound by residues H645, C647, and E669. Catalysis depends on H698, which acts as the Proton donor. C730 serves as a coordination point for Zn(2+).

The protein belongs to the vitamin-B12 independent methionine synthase family. Requires Zn(2+) as cofactor.

It carries out the reaction 5-methyltetrahydropteroyltri-L-glutamate + L-homocysteine = tetrahydropteroyltri-L-glutamate + L-methionine. It functions in the pathway amino-acid biosynthesis; L-methionine biosynthesis via de novo pathway; L-methionine from L-homocysteine (MetE route): step 1/1. In terms of biological role, catalyzes the transfer of a methyl group from 5-methyltetrahydrofolate to homocysteine resulting in methionine formation. The polypeptide is 5-methyltetrahydropteroyltriglutamate--homocysteine methyltransferase (Burkholderia thailandensis (strain ATCC 700388 / DSM 13276 / CCUG 48851 / CIP 106301 / E264)).